A 103-amino-acid chain; its full sequence is Large ribosomal subunit protein bL28 (103 aa).

It belongs to the bacterial ribosomal protein bL28 family.

The chain is Large ribosomal subunit protein bL28 from Anaplasma phagocytophilum (strain HZ).